Here is a 207-residue protein sequence, read N- to C-terminus: MLNTLTRLLDDAGITLPEHQKAQLVAYVDMLNKWNKAYNLTSVRDPNEMLVRHIMDSIVVEPHLKGTRFIDVGTGPGLPGIPLAIVRPDSHFTLLDSLGKRVRFLRQVQHELKLDNITPVQSRVEAFPAEPPFDGVISRAFASLSDMVNWCHHLPGEEGRFYALKGQRPDDEISALPSGFAVEEIVRLSVPRLDGERHLVILKANRT.

S-adenosyl-L-methionine is bound by residues G73, L78, 124-125, and R139; that span reads VE.

It belongs to the methyltransferase superfamily. RNA methyltransferase RsmG family.

Its subcellular location is the cytoplasm. The catalysed reaction is guanosine(527) in 16S rRNA + S-adenosyl-L-methionine = N(7)-methylguanosine(527) in 16S rRNA + S-adenosyl-L-homocysteine. Specifically methylates the N7 position of guanine in position 527 of 16S rRNA. This is Ribosomal RNA small subunit methyltransferase G from Cronobacter sakazakii (strain ATCC BAA-894) (Enterobacter sakazakii).